A 77-amino-acid chain; its full sequence is Short neurotoxin OH-32 (77 aa).

Residues 1 to 21 (MKNLLLTFLVVTIVCLDLGYT) form the signal peptide. 4 disulfides stabilise this stretch: cysteine 24–cysteine 40, cysteine 33–cysteine 58, cysteine 62–cysteine 70, and cysteine 71–cysteine 76.

This sequence belongs to the three-finger toxin family. Short-chain subfamily. As to expression, expressed by the venom gland.

It localises to the secreted. Functionally, this three-finger toxin binds and inhibits the nicotinic acetylcholine receptor (nAChR). The sequence is that of Short neurotoxin OH-32 from Ophiophagus hannah (King cobra).